The chain runs to 728 residues: Ophiobolin F synthase oblA (728 aa).

The interval 1 to 322 is (7Z)-ophiobola-7,19-dien-3-ol synthase; it reads MEYKYSTIVD…RYHFPGRWNE (322 aa). Aspartate 93 and aspartate 97 together coordinate Mg(2+). Residue aspartate 93 participates in substrate binding. Residues 93-97 carry the DDXXD 1 motif; the sequence is DDEID. Substrate is bound by residues 182-185, asparagine 226, 230-234, and 313-314; these read RCMD, SYEKE, and RY. Residues 226-234 carry the NSE/DTE motif; it reads NDLFSYEKE. The tract at residues 323–728 is geranylfarnesyl diphosphate synthase; it reads LQKLRAEHGI…LRLMVDMLKV (406 aa). Positions 362-371 are enriched in low complexity; it reads GINGTNGVNG. The interval 362 to 394 is disordered; that stretch reads GINGTNGVNGKRNRDEDGDENDARINGNGFKKP. The isopentenyl diphosphate site is built by lysine 439, arginine 442, and histidine 471. Positions 478 and 482 each coordinate Mg(2+). Positions 478-482 match the DDXXD 2 motif; that stretch reads DDIED. Position 487 (arginine 487) interacts with dimethylallyl diphosphate. An isopentenyl diphosphate-binding site is contributed by arginine 488. Positions 565, 566, 604, 611, 621, and 631 each coordinate dimethylallyl diphosphate.

It in the N-terminal section; belongs to the terpene synthase family. This sequence in the C-terminal section; belongs to the FPP/GGPP synthase family. It depends on Mg(2+) as a cofactor.

The enzyme catalyses isopentenyl diphosphate + (2E,6E)-farnesyl diphosphate = (2E,6E,10E)-geranylgeranyl diphosphate + diphosphate. It carries out the reaction isopentenyl diphosphate + (2E,6E,10E)-geranylgeranyl diphosphate = (2E,6E,10E,14E)-geranylfarnesyl diphosphate + diphosphate. It catalyses the reaction (2E,6E,10E,14E)-geranylfarnesyl diphosphate + H2O = ophiobolin F + diphosphate. Its pathway is secondary metabolite biosynthesis; terpenoid biosynthesis. Bifunctional sesterterpene synthase; part of the gene cluster that mediates the biosynthesis of the sesterterpenes ophiobolins, fungal phytotoxins with potential anti-cancer activities. The first step of the pathway is performed by the sesterterpene synthase oblA that possesses both prenyl transferase and terpene cyclase activity, converting isopentenyl diphosphate and dimethylallyl diphosphate into geranylfarnesyl diphosphate (GFPP) and further converting GFPP into ophiobolin F, respectively. Other sesterterpenoids (C(25) terpenoids) are found as minor products of oblA. The cytochrome P450 monooxygenase oblB then catalyzes a four-step oxidative transformation of ophiobolin F to yield ophiobolin C. The function of the cytochrome P450 monooxygenase oblE has still to be determined. In Emericella variicolor (Aspergillus stellatus), this protein is Ophiobolin F synthase oblA.